The following is a 438-amino-acid chain: UDP-N-acetylmuramoylalanine--D-glutamate ligase (438 aa).

Glycine 112 to threonine 118 lines the ATP pocket.

It belongs to the MurCDEF family.

Its subcellular location is the cytoplasm. It carries out the reaction UDP-N-acetyl-alpha-D-muramoyl-L-alanine + D-glutamate + ATP = UDP-N-acetyl-alpha-D-muramoyl-L-alanyl-D-glutamate + ADP + phosphate + H(+). It participates in cell wall biogenesis; peptidoglycan biosynthesis. Its function is as follows. Cell wall formation. Catalyzes the addition of glutamate to the nucleotide precursor UDP-N-acetylmuramoyl-L-alanine (UMA). This chain is UDP-N-acetylmuramoylalanine--D-glutamate ligase, found in Shigella sonnei (strain Ss046).